Reading from the N-terminus, the 319-residue chain is MKRIGVLTSGGDSPGMNAAIRAVVRKAIFHDIEVYGIYHGYAGLISGHIEKLELGSVGDIIHRGGTKLYTARCPEFKDPEVRLKGIEQLKKHGIEGLVVIGGDGSYQGAKKLTEQGFPCVGVPGTIDNDIPGTDFTIGFDTALNTVIDAIDKIRDTATSHERTYVIEVMGRHAGDIALWAGLADGAETILIPEEKYDMEDVIARLKRGSERGKKHSIIVVAEGVGSAIDIGKHIEEATSFDTRVTVLGHVQRGGSPSAQDRVLASRLGARAVELLIAGNGGRCVGIQNNKLVDHDIIEALAQKHTIDKDMYQLSKELSI.

G11 is a binding site for ATP. 21 to 25 (RAVVR) contributes to the ADP binding site. ATP is bound by residues 72–73 (RC) and 102–105 (GDGS). A Mg(2+)-binding site is contributed by D103. 125–127 (TID) serves as a coordination point for substrate. D127 acts as the Proton acceptor in catalysis. R154 contributes to the ADP binding site. Residues R162 and 169–171 (MGR) each bind substrate. ADP is bound by residues 185–187 (GAE), R211, and 213–215 (KKH). Residues E222, R243, and 249–252 (HVQR) contribute to the substrate site.

The protein belongs to the phosphofructokinase type A (PFKA) family. ATP-dependent PFK group I subfamily. Prokaryotic clade 'B1' sub-subfamily. In terms of assembly, homotetramer. Mg(2+) serves as cofactor.

The protein localises to the cytoplasm. The catalysed reaction is beta-D-fructose 6-phosphate + ATP = beta-D-fructose 1,6-bisphosphate + ADP + H(+). The protein operates within carbohydrate degradation; glycolysis; D-glyceraldehyde 3-phosphate and glycerone phosphate from D-glucose: step 3/4. Its activity is regulated as follows. Allosterically activated by ADP and other diphosphonucleosides, and allosterically inhibited by phosphoenolpyruvate. Catalyzes the phosphorylation of D-fructose 6-phosphate to fructose 1,6-bisphosphate by ATP, the first committing step of glycolysis. This is ATP-dependent 6-phosphofructokinase from Bacillus mycoides (strain KBAB4) (Bacillus weihenstephanensis).